Consider the following 116-residue polypeptide: Putative anti-sigma factor antagonist BtrV (116 aa).

The 110-residue stretch at 1 to 110 folds into the STAS domain; it reads MKLTMDKIDG…NSREAAAAAF (110 aa). Serine 55 carries the phosphoserine; by BtrW modification.

Belongs to the anti-sigma-factor antagonist family. Interacts with BtrW. Phosphorylated by BtrW. Dephosphorylated by BtrU.

In terms of biological role, possible positive regulator of sigma-B activity. Non-phosphorylated BtrV binds to BtrW, preventing its association with an unknown partner(s) that might be sigma-B. When phosphorylated, releases BtrW, which is then free to complex with and inactivate its partner. Involved in type III secretion system (T3SS). In Bordetella bronchiseptica (strain ATCC BAA-588 / NCTC 13252 / RB50) (Alcaligenes bronchisepticus), this protein is Putative anti-sigma factor antagonist BtrV (btrV).